Here is a 129-residue protein sequence, read N- to C-terminus: Small ribosomal subunit protein uS9 (129 aa).

It belongs to the universal ribosomal protein uS9 family.

The protein is Small ribosomal subunit protein uS9 of Aliarcobacter butzleri (strain RM4018) (Arcobacter butzleri).